The primary structure comprises 373 residues: ATP phosphoribosyltransferase regulatory subunit (373 aa).

The protein belongs to the class-II aminoacyl-tRNA synthetase family. HisZ subfamily. Heteromultimer composed of HisG and HisZ subunits.

It is found in the cytoplasm. It functions in the pathway amino-acid biosynthesis; L-histidine biosynthesis; L-histidine from 5-phospho-alpha-D-ribose 1-diphosphate: step 1/9. Functionally, required for the first step of histidine biosynthesis. May allow the feedback regulation of ATP phosphoribosyltransferase activity by histidine. This is ATP phosphoribosyltransferase regulatory subunit from Chelativorans sp. (strain BNC1).